Consider the following 229-residue polypeptide: Orotidine 5'-phosphate decarboxylase (229 aa).

Substrate-binding positions include Asp-11, Lys-33, 60–69 (DLKFHDIPNT), Thr-119, Arg-180, Gln-189, Gly-209, and Arg-210. Lys-62 serves as the catalytic Proton donor.

The protein belongs to the OMP decarboxylase family. Type 1 subfamily. In terms of assembly, homodimer.

It carries out the reaction orotidine 5'-phosphate + H(+) = UMP + CO2. It participates in pyrimidine metabolism; UMP biosynthesis via de novo pathway; UMP from orotate: step 2/2. In terms of biological role, catalyzes the decarboxylation of orotidine 5'-monophosphate (OMP) to uridine 5'-monophosphate (UMP). The polypeptide is Orotidine 5'-phosphate decarboxylase (Dichelobacter nodosus (strain VCS1703A)).